The sequence spans 264 residues: Glutamate racemase (264 aa).

Substrate-binding positions include 10-11 and 42-43; these read DS and YG. Cys-73 serves as the catalytic Proton donor/acceptor. 74–75 serves as a coordination point for substrate; that stretch reads NT. The active-site Proton donor/acceptor is Cys-183. 184-185 provides a ligand contact to substrate; the sequence is TH.

This sequence belongs to the aspartate/glutamate racemases family.

The catalysed reaction is L-glutamate = D-glutamate. It functions in the pathway cell wall biogenesis; peptidoglycan biosynthesis. Its function is as follows. Provides the (R)-glutamate required for cell wall biosynthesis. In Streptococcus agalactiae serotype III (strain NEM316), this protein is Glutamate racemase.